We begin with the raw amino-acid sequence, 218 residues long: Octanoyltransferase (218 aa).

The region spanning 32–218 is the BPL/LPL catalytic domain; that stretch reads GEAAEAIWLL…LRTFPQHFPD (187 aa). Substrate is bound by residues 71-78, 151-153, and 164-166; these read RGGQYTYH, AIG, and GLS. Cys-182 (acyl-thioester intermediate) is an active-site residue.

It belongs to the LipB family.

The protein localises to the cytoplasm. It carries out the reaction octanoyl-[ACP] + L-lysyl-[protein] = N(6)-octanoyl-L-lysyl-[protein] + holo-[ACP] + H(+). The protein operates within protein modification; protein lipoylation via endogenous pathway; protein N(6)-(lipoyl)lysine from octanoyl-[acyl-carrier-protein]: step 1/2. Functionally, catalyzes the transfer of endogenously produced octanoic acid from octanoyl-acyl-carrier-protein onto the lipoyl domains of lipoate-dependent enzymes. Lipoyl-ACP can also act as a substrate although octanoyl-ACP is likely to be the physiological substrate. This chain is Octanoyltransferase, found in Cereibacter sphaeroides (strain ATCC 17023 / DSM 158 / JCM 6121 / CCUG 31486 / LMG 2827 / NBRC 12203 / NCIMB 8253 / ATH 2.4.1.) (Rhodobacter sphaeroides).